Consider the following 425-residue polypeptide: Histidine--tRNA ligase (425 aa).

This sequence belongs to the class-II aminoacyl-tRNA synthetase family. As to quaternary structure, homodimer.

The protein resides in the cytoplasm. It catalyses the reaction tRNA(His) + L-histidine + ATP = L-histidyl-tRNA(His) + AMP + diphosphate + H(+). The chain is Histidine--tRNA ligase from Shewanella sp. (strain ANA-3).